A 218-amino-acid chain; its full sequence is Peptide deformylase (218 aa).

2 residues coordinate Fe cation: cysteine 130 and histidine 172. The active site involves glutamate 173. Histidine 176 serves as a coordination point for Fe cation.

It belongs to the polypeptide deformylase family. Fe(2+) serves as cofactor.

The enzyme catalyses N-terminal N-formyl-L-methionyl-[peptide] + H2O = N-terminal L-methionyl-[peptide] + formate. Functionally, removes the formyl group from the N-terminal Met of newly synthesized proteins. Requires at least a dipeptide for an efficient rate of reaction. N-terminal L-methionine is a prerequisite for activity but the enzyme has broad specificity at other positions. The protein is Peptide deformylase of Bifidobacterium adolescentis (strain ATCC 15703 / DSM 20083 / NCTC 11814 / E194a).